The following is an 895-amino-acid chain: Cellulose 1,4-beta-cellobiosidase (895 aa).

A signal peptide spans 1-27 (MNFRRMLCAAIVLTIVLSIMLPSTVFA). Residues 40 to 199 (NDLLYERTFD…YLDDVSLYDP (160 aa)) enclose the CBM-cenC domain. A linker region spans residues 199-240 (PRFVKPVEYVLPQPDVRVNQVGYLPFAKKYATVVSSSTSPLK). Residues 241-815 (WQLLNSANQV…WVTAYLDEID (575 aa)) are catalytic. The Nucleophile role is filled by Asp386. Catalysis depends on residues His737, Asp786, and Glu795. Residues 828-894 (PEVIYGDCNG…ILKEIDVLPH (67 aa)) enclose the Dockerin domain.

Belongs to the glycosyl hydrolase 9 (cellulase E) family.

It is found in the secreted. The catalysed reaction is Hydrolysis of (1-&gt;4)-beta-D-glucosidic linkages in cellulose and cellotetraose, releasing cellobiose from the non-reducing ends of the chains.. With respect to regulation, inhibited by cellobiose. The sequence is that of Cellulose 1,4-beta-cellobiosidase (celK) from Acetivibrio thermocellus (Hungateiclostridium thermocellum).